Reading from the N-terminus, the 397-residue chain is MGFRIRESLLLNLRKVPGSRVKARETMVSVTMATSEWIQFFKEAGIPPGPAVNYAVMFVDNRIQKSMLLDLNKEIMNELGVTVVGDIIAILKHAKVVHRQDMCKAATASVPCTPSPLQGELRRGASSAASRMIANSLNHDSPPHTPARRSDNSTSKISVTVSNKVAVKNAKAAALAHREEESLVVPTKRRRVTAEMEGKYIIHMPKGTTPRTRKILEQQQAAKGLHRTSVFDRLGAETKADTTTGTKPTGVFSRLGATPEMDEELAWDSDNDSSSSSVLQYAGVLKKLGRGPTKASPQPALTVKAKATSSATTLASTPKLRRLALPSRPGPEKKPESLPKVSILKRLGKAAVVSEAQDSQVTSTKSPTVRCIVPDPPAPLASQRPPRRRWRRTCKDC.

2 positions are modified to phosphoserine: serine 115 and serine 141. The disordered stretch occupies residues asparagine 135–lysine 156. A Glycyl lysine isopeptide (Lys-Gly) (interchain with G-Cter in SUMO2) cross-link involves residue lysine 239. Phosphoserine is present on residues serine 269 and serine 296. Positions glycine 289–serine 316 are disordered. Residues alanine 300–serine 316 show a composition bias toward low complexity. Serine 342 bears the Phosphoserine mark. Residues serine 354 to cysteine 397 are disordered. The span at alanine 356 to proline 367 shows a compositional bias: polar residues. Positions proline 385–cysteine 397 are enriched in basic residues.

This is an uncharacterized protein from Rattus norvegicus (Rat).